Consider the following 258-residue polypeptide: Imidazole glycerol phosphate synthase subunit HisF (258 aa).

Active-site residues include aspartate 11 and aspartate 130.

Belongs to the HisA/HisF family. Heterodimer of HisH and HisF.

The protein resides in the cytoplasm. It catalyses the reaction 5-[(5-phospho-1-deoxy-D-ribulos-1-ylimino)methylamino]-1-(5-phospho-beta-D-ribosyl)imidazole-4-carboxamide + L-glutamine = D-erythro-1-(imidazol-4-yl)glycerol 3-phosphate + 5-amino-1-(5-phospho-beta-D-ribosyl)imidazole-4-carboxamide + L-glutamate + H(+). It participates in amino-acid biosynthesis; L-histidine biosynthesis; L-histidine from 5-phospho-alpha-D-ribose 1-diphosphate: step 5/9. IGPS catalyzes the conversion of PRFAR and glutamine to IGP, AICAR and glutamate. The HisF subunit catalyzes the cyclization activity that produces IGP and AICAR from PRFAR using the ammonia provided by the HisH subunit. This is Imidazole glycerol phosphate synthase subunit HisF from Escherichia coli O17:K52:H18 (strain UMN026 / ExPEC).